Consider the following 128-residue polypeptide: 3-aminoacrylate deaminase RutC (128 aa).

Belongs to the RutC family. As to quaternary structure, homotrimer.

The enzyme catalyses (Z)-3-aminoacrylate + H2O + H(+) = 3-oxopropanoate + NH4(+). In terms of biological role, involved in pyrimidine catabolism. Catalyzes the deamination of 3-aminoacrylate to malonic semialdehyde, a reaction that can also occur spontaneously. RutC may facilitate the reaction and modulate the metabolic fitness, rather than catalyzing essential functions. In Escherichia coli O111:H- (strain 11128 / EHEC), this protein is 3-aminoacrylate deaminase RutC.